Here is a 335-residue protein sequence, read N- to C-terminus: Nuclear envelope-associated protein 2 (335 aa).

2 coiled-coil regions span residues 55-85 (RKEA…ELVA) and 125-260 (CSVL…LKKK). Positions 239–260 (KTKELESQLERQRRADQELKKK) match the Bipartite nuclear localization signal motif. Residues 312–329 (FWDTSGFKIVVSMSMLIL) form a helical membrane-spanning segment.

As to quaternary structure, forms homomers and heteromers with NEAP1 and NEAP3. Interacts with SUN1 and SUN2.

It is found in the nucleus inner membrane. Its subcellular location is the nucleus. The protein resides in the nucleoplasm. The polypeptide is Nuclear envelope-associated protein 2 (Arabidopsis thaliana (Mouse-ear cress)).